The following is a 572-amino-acid chain: Cytochrome P450 monooxygenase xilC (572 aa).

Residue C515 coordinates heme.

This sequence belongs to the cytochrome P450 family. Heme serves as cofactor.

It functions in the pathway secondary metabolite biosynthesis. In terms of biological role, cytochrome P450 monooxygenase; part of the gene cluster that mediates the biosynthesis of the 6-methyl-2-pyrone derivative xylariolide D. XilC hydroxylates the 5-alkyl-6-methyl-2-pyrone backbone called prexylariolide D, produced by the highly reducing polyketide synthase xilA, on its side chain to form xylariolide D. The sequence is that of Cytochrome P450 monooxygenase xilC from Penicillium rubens (strain ATCC 28089 / DSM 1075 / NRRL 1951 / Wisconsin 54-1255) (Penicillium chrysogenum).